We begin with the raw amino-acid sequence, 261 residues long: uncharacterized protein (261 aa).

3 helical membrane-spanning segments follow: residues W15–C35, V87–A107, and L131–I151. Positions L234–E246 are enriched in basic and acidic residues. Positions L234–Q261 are disordered.

It localises to the membrane. This is an uncharacterized protein from Caenorhabditis elegans.